The sequence spans 247 residues: Carboxy-S-adenosyl-L-methionine synthase (247 aa).

S-adenosyl-L-methionine-binding positions include Tyr40, 65-67 (GSS), 90-91 (DN), 122-123 (DI), Asn137, and Arg204.

It belongs to the class I-like SAM-binding methyltransferase superfamily. Cx-SAM synthase family. Homodimer.

It catalyses the reaction prephenate + S-adenosyl-L-methionine = carboxy-S-adenosyl-L-methionine + 3-phenylpyruvate + H2O. Catalyzes the conversion of S-adenosyl-L-methionine (SAM) to carboxy-S-adenosyl-L-methionine (Cx-SAM). This chain is Carboxy-S-adenosyl-L-methionine synthase, found in Pseudomonas fluorescens (strain SBW25).